A 139-amino-acid polypeptide reads, in one-letter code: Cytochrome c2 (139 aa).

An N-terminal signal peptide occupies residues 1–25; sequence MVKKLLTILSIAATAGSLSIGTASA. Gln-26 carries the post-translational modification Pyrrolidone carboxylic acid. Residues Cys-38, Cys-41, His-42, and Met-118 each coordinate heme c.

Belongs to the cytochrome c family. Post-translationally, binds 1 heme c group covalently per subunit.

Functionally, cytochrome c2 is found mainly in purple, non-sulfur, photosynthetic bacteria where it functions as the electron donor to the oxidized bacteriochlorophyll in the photophosphorylation pathway. However, it may also have a role in the respiratory chain and is found in some non-photosynthetic bacteria. The polypeptide is Cytochrome c2 (cycA) (Rhodopseudomonas palustris (strain ATCC BAA-98 / CGA009)).